Reading from the N-terminus, the 365-residue chain is tRNA-specific 2-thiouridylase MnmA (365 aa).

Residues G6–S13 and M32 contribute to the ATP site. The interval N92–D94 is interaction with target base in tRNA. The active-site Nucleophile is the C97. C97 and C197 are joined by a disulfide. ATP is bound at residue G121. The interaction with tRNA stretch occupies residues K147–Q149. C197 acts as the Cysteine persulfide intermediate in catalysis. The interval R315–Y316 is interaction with tRNA.

This sequence belongs to the MnmA/TRMU family.

It localises to the cytoplasm. The catalysed reaction is S-sulfanyl-L-cysteinyl-[protein] + uridine(34) in tRNA + AH2 + ATP = 2-thiouridine(34) in tRNA + L-cysteinyl-[protein] + A + AMP + diphosphate + H(+). Its function is as follows. Catalyzes the 2-thiolation of uridine at the wobble position (U34) of tRNA, leading to the formation of s(2)U34. This Azoarcus sp. (strain BH72) protein is tRNA-specific 2-thiouridylase MnmA.